The chain runs to 170 residues: Methanogen homoaconitase small subunit (170 aa).

The short motif at Tyr-26–Thr-29 is the YLRT element.

Belongs to the LeuD family. LeuD type 2 subfamily. Heterotetramer of 2 HacA and 2 HacB proteins.

It carries out the reaction (2R)-homocitrate = (2R,3S)-homoisocitrate. It catalyses the reaction (2R)-homocitrate = cis-homoaconitate + H2O. The catalysed reaction is (2R,3S)-homoisocitrate = cis-homoaconitate + H2O. The enzyme catalyses cis-(homo)2aconitate + H2O = (2R,3S)-iso(homo)2citrate. It carries out the reaction cis-(homo)3aconitate + H2O = (2R,3S)-iso(homo)3citrate. The protein operates within organic acid metabolism; 2-oxosuberate biosynthesis. Its function is as follows. Component of a hydro-lyase with broad substrate specificity for cis-unsaturated tricarboxylic acids. Catalyzes both the reversible dehydration of (R)-homocitrate ((R)-2-hydroxybutane-1,2,4-tricarboxylate) to produce cis-homoaconitate ((Z)-but-1-ene-1,2,4-tricarboxylate), and its hydration to homoisocitrate ((1R,2S)-1-hydroxybutane-1,2,4-tricarboxylate). Is also able to hydrate the analogous longer chain substrates cis-homo(2)-aconitate, cis-homo(3)-aconitate. These reactions are part of the biosynthesis pathway of coenzyme B. In Methanothermobacter thermautotrophicus (strain ATCC 29096 / DSM 1053 / JCM 10044 / NBRC 100330 / Delta H) (Methanobacterium thermoautotrophicum), this protein is Methanogen homoaconitase small subunit (hacB).